The primary structure comprises 556 residues: Dihydroxy-acid dehydratase (556 aa).

Asp78 serves as a coordination point for Mg(2+). Residue Cys119 participates in [2Fe-2S] cluster binding. Residues Asp120 and Lys121 each coordinate Mg(2+). Lys121 carries the post-translational modification N6-carboxylysine. Cys191 serves as a coordination point for [2Fe-2S] cluster. Residue Glu442 coordinates Mg(2+). Ser468 functions as the Proton acceptor in the catalytic mechanism.

Belongs to the IlvD/Edd family. Homodimer. [2Fe-2S] cluster serves as cofactor. The cofactor is Mg(2+).

The enzyme catalyses (2R)-2,3-dihydroxy-3-methylbutanoate = 3-methyl-2-oxobutanoate + H2O. It catalyses the reaction (2R,3R)-2,3-dihydroxy-3-methylpentanoate = (S)-3-methyl-2-oxopentanoate + H2O. Its pathway is amino-acid biosynthesis; L-isoleucine biosynthesis; L-isoleucine from 2-oxobutanoate: step 3/4. The protein operates within amino-acid biosynthesis; L-valine biosynthesis; L-valine from pyruvate: step 3/4. In terms of biological role, functions in the biosynthesis of branched-chain amino acids. Catalyzes the dehydration of (2R,3R)-2,3-dihydroxy-3-methylpentanoate (2,3-dihydroxy-3-methylvalerate) into 2-oxo-3-methylpentanoate (2-oxo-3-methylvalerate) and of (2R)-2,3-dihydroxy-3-methylbutanoate (2,3-dihydroxyisovalerate) into 2-oxo-3-methylbutanoate (2-oxoisovalerate), the penultimate precursor to L-isoleucine and L-valine, respectively. The chain is Dihydroxy-acid dehydratase from Clostridium kluyveri (strain NBRC 12016).